Consider the following 522-residue polypeptide: MEPGGARLRLQRTEGLGGERERQPCGDGNTETHRAPDLVQWTRHMEAVKAQLLEQAQGQLRELLDRAMREAIQSYPSQDKPLPPPPPGSLSRTQEPSLGKQKVFIIRKSLLDELMEVQHFRTIYHMFIAGLCVFIISTLAIDFIDEGRLLLEFDLLIFSFGQLPLALVTWVPMFLSTLLAPYQALRLWARGTWTQATGLGCALLAAHAVVLCALPVHVAVEHQLPPASRCVLVFEQVRFLMKSYSFLREAVPGTLRARRGEGIQAPSFSSYLYFLFCPTLIYRETYPRTPYVRWNYVAKNFAQALGCVLYACFILGRLCVPVFANMSREPFSTRALVLSILHATLPGIFMLLLIFFAFLHCWLNAFAEMLRFGDRMFYRDWWNSTSFSNYYRTWNVVVHDWLYSYVYQDGLRLLGARARGVAMLGVFLVSAVAHEYIFCFVLGFFYPVMLILFLVIGGMLNFMMHDQRTGPAWNVLMWTMLFLGQGIQVSLYCQEWYARRHCPLPQATFWGLVTPRSWSCHT.

Disordered stretches follow at residues 1-36 (MEPG…HRAP) and 74-96 (SYPS…TQEP). At 1-120 (MEPGGARLRL…LDELMEVQHF (120 aa)) the chain is on the cytoplasmic side. Over residues 17–36 (GGERERQPCGDGNTETHRAP) the composition is skewed to basic and acidic residues. A cholesterol-binding site is contributed by His-119. Residues 121-142 (RTIYHMFIAGLCVFIISTLAID) traverse the membrane as a helical segment. The Lumenal segment spans residues 143-162 (FIDEGRLLLEFDLLIFSFGQ). The chain crosses the membrane as a helical span at residues 163-188 (LPLALVTWVPMFLSTLLAPYQALRLW). The Cytoplasmic segment spans residues 189-196 (ARGTWTQA). A helical transmembrane segment spans residues 197–220 (TGLGCALLAAHAVVLCALPVHVAV). Residues 221 to 228 (EHQLPPAS) lie on the Lumenal side of the membrane. A helical transmembrane segment spans residues 229–252 (RCVLVFEQVRFLMKSYSFLREAVP). Topologically, residues 253-293 (GTLRARRGEGIQAPSFSSYLYFLFCPTLIYRETYPRTPYVR) are cytoplasmic. A Cysteine sulfenic acid (-SOH); alternate modification is found at Cys-277. Residue Cys-277 forms a Glycyl cysteine thioester (Cys-Gly) (interchain with G-Cter in ubiquitin); alternate linkage. The chain crosses the membrane as a helical span at residues 294–326 (WNYVAKNFAQALGCVLYACFILGRLCVPVFANM). The Lumenal portion of the chain corresponds to 327–343 (SREPFSTRALVLSILHA). The chain crosses the membrane as a helical span at residues 344-369 (TLPGIFMLLLIFFAFLHCWLNAFAEM). Residues 370-417 (LRFGDRMFYRDWWNSTSFSNYYRTWNVVVHDWLYSYVYQDGLRLLGAR) lie on the Cytoplasmic side of the membrane. Residues 377–383 (FYRDWWN) carry the FYXDWWN motif motif. Residues Asn-389, Arg-392, Asn-395, His-399, Tyr-407, and Ser-430 each coordinate an acyl-CoA. A helical membrane pass occupies residues 418 to 442 (ARGVAMLGVFLVSAVAHEYIFCFVL). Residue His-434 is part of the active site. Residues 443-448 (GFFYPV) lie on the Lumenal side of the membrane. A helical transmembrane segment spans residues 449-464 (MLILFLVIGGMLNFMM). Residues 465 to 470 (HDQRTG) are Cytoplasmic-facing. The helical transmembrane segment at 471–502 (PAWNVLMWTMLFLGQGIQVSLYCQEWYARRHC) threads the bilayer. Over 503 to 522 (PLPQATFWGLVTPRSWSCHT) the chain is Lumenal.

Belongs to the membrane-bound acyltransferase family. Sterol o-acyltransferase subfamily. In terms of assembly, may form homo- or heterodimers. Interacts with INSIG1; the interaction is direct and promotes association with AMFR/gp78. Polyubiquitinated by AMFR/gp78 at Cys-277, leading to its degradation when the lipid levels are low. Association with AMFR/gp78 is mediated via interaction with INSIG1. High concentration of cholesterol and fatty acid results in Cys-277 oxidation, preventing ubiquitination at the same site, resulting in protein stabilization. Post-translationally, oxidized at Cys-277: high concentration of cholesterol and fatty acid induce reactive oxygen species, which oxidizes Cys-277, preventing ubiquitination at the same site, and resulting in protein stabilization. In terms of tissue distribution, expression seems confined in hepatocytes and enterocytes.

The protein localises to the endoplasmic reticulum membrane. The catalysed reaction is a sterol + a long-chain fatty acyl-CoA = a long-chain 3-hydroxysterol ester + CoA. The enzyme catalyses cholesterol + an acyl-CoA = a cholesterol ester + CoA. It catalyses the reaction cholesterol + (9Z)-octadecenoyl-CoA = cholesteryl (9Z-octadecenoate) + CoA. It carries out the reaction (5Z,8Z,11Z,14Z,17Z)-eicosapentaenoyl-CoA + cholesterol = (5Z,8Z,11Z,14Z,17Z-eicosapentaenoyl)-cholesterol + CoA. The catalysed reaction is (9Z,12Z,15Z)-octadecatrienoyl-CoA + cholesterol = (9Z,12Z,15Z-octadecatrienoyl)-cholesterol + CoA. The enzyme catalyses (5Z,8Z,11Z,14Z)-eicosatetraenoyl-CoA + cholesterol = cholesteryl (5Z,8Z,11Z,14Z)-eicosatetraenoate + CoA. Catalyzes the formation of fatty acid-cholesterol esters, which are less soluble in membranes than cholesterol. Plays a role in lipoprotein assembly and dietary cholesterol absorption. Utilizes oleoyl-CoA ((9Z)-octadecenoyl-CoA) and linolenoyl-CoA ((9Z,12Z,15Z)-octadecatrienoyl-CoA) as substrates. May provide cholesteryl esters for lipoprotein secretion from hepatocytes and intestinal mucosa. Its function is as follows. Has lower enzymatic activity compared to isoform 1. This is Sterol O-acyltransferase 2 from Homo sapiens (Human).